Here is a 283-residue protein sequence, read N- to C-terminus: Thymidylate synthase (283 aa).

Arg-22 serves as a coordination point for dUMP. Cys-160 serves as the catalytic Nucleophile. DUMP contacts are provided by residues 180–183 (RSCD), Asn-191, and 221–223 (HIY). Asp-183 is a binding site for (6R)-5,10-methylene-5,6,7,8-tetrahydrofolate. Ser-282 is a (6R)-5,10-methylene-5,6,7,8-tetrahydrofolate binding site.

The protein belongs to the thymidylate synthase family. Bacterial-type ThyA subfamily. Homodimer.

The protein localises to the cytoplasm. It carries out the reaction dUMP + (6R)-5,10-methylene-5,6,7,8-tetrahydrofolate = 7,8-dihydrofolate + dTMP. The protein operates within pyrimidine metabolism; dTTP biosynthesis. Catalyzes the reductive methylation of 2'-deoxyuridine-5'-monophosphate (dUMP) to 2'-deoxythymidine-5'-monophosphate (dTMP) while utilizing 5,10-methylenetetrahydrofolate (mTHF) as the methyl donor and reductant in the reaction, yielding dihydrofolate (DHF) as a by-product. This enzymatic reaction provides an intracellular de novo source of dTMP, an essential precursor for DNA biosynthesis. The chain is Thymidylate synthase from Shewanella halifaxensis (strain HAW-EB4).